Reading from the N-terminus, the 63-residue chain is 2-hydroxymuconate tautomerase (63 aa).

Pro2 serves as the catalytic Proton acceptor; via imino nitrogen.

This sequence belongs to the 4-oxalocrotonate tautomerase family. As to quaternary structure, homohexamer.

The catalysed reaction is (2Z,4E)-2-hydroxyhexa-2,4-dienedioate = (3E)-2-oxohex-3-enedioate. Its pathway is aromatic compound metabolism; salicylate degradation. In terms of biological role, catalyzes the ketonization of 2-hydroxymuconate stereoselectively to yield 2-oxo-3-hexenedioate. The chain is 2-hydroxymuconate tautomerase (tdnL) from Pseudomonas putida (Arthrobacter siderocapsulatus).